The following is a 468-amino-acid chain: Uronate isomerase (468 aa).

The protein belongs to the metallo-dependent hydrolases superfamily. Uronate isomerase family.

It catalyses the reaction D-glucuronate = D-fructuronate. The enzyme catalyses aldehydo-D-galacturonate = keto-D-tagaturonate. The protein operates within carbohydrate metabolism; pentose and glucuronate interconversion. The protein is Uronate isomerase of Brachyspira hyodysenteriae (strain ATCC 49526 / WA1).